The primary structure comprises 162 residues: Terminase, small subunit (162 aa).

The interval 7-27 (NRFWEARSSHGRNPKFESPEA) is helix-turn-helix (HTH). The segment at 132–162 (QVEDVTPDKGDRDKRRSRIKELFNRGTGRDS) is disordered. Over residues 137-162 (TPDKGDRDKRRSRIKELFNRGTGRDS) the composition is skewed to basic and acidic residues. The tract at residues 140–162 (KGDRDKRRSRIKELFNRGTGRDS) is interaction with the terminase large subunit gp2. The DNA-binding element occupies 143–152 (RDKRRSRIKE).

It belongs to the P22likvirus small terminase family. In terms of assembly, homononamer; forms a ring-like structure through which genomic DNA is translocated into the capsid. Interacts with the terminase small subunit; the active complex is composed of dimer of terminase large subunits and a nonamer ring of terminase small subunits.

Functionally, the terminase small subunit binds to the packaging initiation site and regulates the ATPase activity of the terminase large subunit. The terminase lies at a unique vertex of the procapsid and is composed of two subunits, a small terminase subunit involved in viral DNA recognition (packaging 'pac' sequence), and a large terminase subunit possessing endonucleolytic and ATPase activities. Both terminase subunits heterooligomerize and are docked on the portal protein to form the packaging machine. The terminase large subunit exhibits endonuclease activity and cleaves the viral genome concatemer once the capsid is full (headful packaging). Once the capsid is packaged with the DNA, the terminase complex is substituted by neck proteins. The sequence is that of Terminase, small subunit (3) from Salmonella typhimurium (Bacteriophage P22).